The sequence spans 580 residues: PTS system fructose-specific EIIB'BC component (580 aa).

PTS EIIB type-2 domains are found at residues 1–99 and 120–215; these read MSSS…QLAA and IVAI…KALA. The Phosphocysteine intermediate; for EIIB activity role is filled by C126. C126 is subject to Phosphocysteine; by EIIA. The 338-residue stretch at 243–580 folds into the PTS EIIC type-2 domain; sequence AYKHLMTGVS…LKKPVADVIA (338 aa). The next 9 helical transmembrane spans lie at 254-274, 289-309, 332-352, 369-389, 410-430, 451-471, 483-503, 509-529, and 549-571; these read MLPF…LGGI, LFQI…AGYI, LNAG…GVAA, VLIL…YVFG, SALL…GGPV, AAAM…TWVF, ATAA…PYAA, TIPA…TAGA, and HLLN…LRLL.

The protein localises to the cell inner membrane. It catalyses the reaction D-fructose(out) + N(pros)-phospho-L-histidyl-[protein] = D-fructose 1-phosphate(in) + L-histidyl-[protein]. The phosphoenolpyruvate-dependent sugar phosphotransferase system (sugar PTS), a major carbohydrate active transport system, catalyzes the phosphorylation of incoming sugar substrates concomitantly with their translocation across the cell membrane. The enzyme II FruAB PTS system is involved in fructose transport. This Xanthomonas campestris pv. campestris (strain ATCC 33913 / DSM 3586 / NCPPB 528 / LMG 568 / P 25) protein is PTS system fructose-specific EIIB'BC component.